Consider the following 82-residue polypeptide: Nuclear protein 1 (82 aa).

The interval 1 to 82 is disordered; the sequence is MATFPPATSA…SERKKRGARR (82 aa). The span at 17 to 28 shows a compositional bias: acidic residues; that stretch reads PEDEDSSLDESD. Positions 65 to 82 match the Nuclear localization signal motif; that stretch reads KLVTKLQNSERKKRGARR.

The protein belongs to the NUPR family. Monomer. Directly interacts with MSL1 and binds MORF4L1, two components of histone acetyltransferase complex; the interaction with MORF4L1 may be mediated by MSL1. Interacts with EP300; this interaction enhances the effect of EP300 on PAX2 transcription factor activity. Interacts with PAXIP1; this interaction prevents PAXIP1 inhibition of PAX2 transcription factor activity. Interacts with COPS5; this interaction allows COPS5-dependent CDKN1B nuclear to cytoplasm translocation. Interacts with RNF2. Interacts with FOXO3; this interaction represses FOXO3 transactivation. Interacts with PTMA; negatively regulates apoptotic process. Interacts with MYOD1, EP300 and DDX5; this interaction coordinates the association of anti-proliferative and pro-myogenic proteins at the myogenin promoter. Interacts with TP53; interaction is stress-dependent. Forms a complex with EP300 and TP53; this complex binds CDKN1A promoter leading to transcriptional induction of CDKN1A. Post-translationally, phosphorylated in vitro by PKA and CK. Phosphorylation promotes DNA-binding activity. In terms of processing, acetylated by EP300 in vitro. Widely expressed, with high levels in liver, pancreas, prostate, ovary, colon, thyroid, spinal cord, trachea and adrenal gland, moderate levels in heart, placenta, lung, skeletal muscle, kidney, testis, small intestine, stomach and lymph node, and low levels in brain, spleen, thymus and bone marrow. Not detected in peripheral blood leukocytes.

Its subcellular location is the nucleus. It is found in the cytoplasm. It localises to the perinuclear region. In terms of biological role, transcription regulator that converts stress signals into a program of gene expression that empowers cells with resistance to the stress induced by a change in their microenvironment. Thereby participates in the regulation of many processes namely cell-cycle, apoptosis, autophagy and DNA repair responses. Controls cell cycle progression and protects cells from genotoxic stress induced by doxorubicin through the complex formation with TP53 and EP300 that binds CDKN1A promoter leading to transcriptional induction of CDKN1A. Protects pancreatic cancer cells from stress-induced cell death by binding the RELB promoter and activating its transcription, leading to IER3 transactivation. Negatively regulates apoptosis through interaction with PTMA. Inhibits autophagy-induced apoptosis in cardiac cells through FOXO3 interaction, inducing cytoplasmic translocation of FOXO3 thereby preventing the FOXO3 association with the pro-autophagic BNIP3 promoter. Inhibits cell growth and facilitates programmed cell death by apoptosis after adriamycin-induced DNA damage through transactivation of TP53. Regulates methamphetamine-induced apoptosis and autophagy through DDIT3-mediated endoplasmic reticulum stress pathway. Participates in DNA repair following gamma-irradiation by facilitating DNA access of the transcription machinery through interaction with MSL1 leading to inhibition of histone H4' Lys-16' acetylation (H4K16ac). Coactivator of PAX2 transcription factor activity, both by recruiting EP300 to increase PAX2 transcription factor activity and by binding PAXIP1 to suppress PAXIP1-induced inhibition on PAX2. Positively regulates cell cycle progression through interaction with COPS5 inducing cytoplasmic translocation of CDKN1B leading to the CDKN1B degradation. Coordinates, through its interaction with EP300, the assiociation of MYOD1, EP300 and DDX5 to the MYOG promoter, leading to inhibition of cell-cycle progression and myogenic differentiation promotion. Negatively regulates beta cell proliferation via inhibition of cell-cycle regulatory genes expression through the suppression of their promoter activities. Also required for LHB expression and ovarian maturation. Exacerbates CNS inflammation and demyelination upon cuprizone treatment. In Homo sapiens (Human), this protein is Nuclear protein 1.